A 499-amino-acid chain; its full sequence is MTDKVRNRVQCWPALAQESSCVDFIPARQGATCGSTVVFIPCCGLTRGRRVLCQWFPCLSGGCCSQESSCVDFIPARQGATCGSTVVFIPCCGLTRGRRVLCQWFPCLSGGCCSQHTVNIIGEPPRPVGAPSFEFVEFGRLPSILSTELKLFQRAPVPEDFGIYYEGNADIARQRWTGGEAKALELLGRRLKQEEEAFREGYYLPTQARPDFLAPPSSMSAALRFGCLSVRMFYWCVHDLFARVQANNQLKHPGGHHITGQLIWREYFYTMSVHNPHYAVMELNPICLNIPWYEAKDDSLDRWKEGRTGFPLIDAAMRQLMAEGWLHHILRNITATFLTRGGLWISWEAGVQHFLKYLLDADWSVCAGNWMWVSSSAFEKLLDSSSCTSPVALARRLDPKGEYVKRYLPELEKFPALYVHEPWKAPPELQEQYGCVIGKDYPAPMVNLAEVNKCNANKMNAIRQKLLDQGGSTPAHCRPSDMDEVRQFFWLPEDVAAES.

Residues R190, S218, S220, Q261, H328, 360–362 (DAD), C366, and N369 contribute to the FAD site.

Belongs to the DNA photolyase class-1 family. Interacts with tim and per; promoted by light conditions. FAD is required as a cofactor.

The protein localises to the cytoplasm. It is found in the perinuclear region. Its subcellular location is the nucleus. Blue light-dependent regulator that is the input of the circadian feedback loop. Has no photolyase activity for cyclobutane pyrimidine dimers or 6-4 photoproducts. Regulation of expression by light suggests a role in photoreception for locomotor activity rhythms. Functions, together with per, as a transcriptional repressor required for the oscillation of peripheral circadian clocks and for the correct specification of clock cells. Genes directly activated by the transcription factors Clock (Clk) and cycle (cyc) are repressed by cry. The protein is Cryptochrome-1 of Culex quinquefasciatus (Southern house mosquito).